Consider the following 194-residue polypeptide: Holliday junction branch migration complex subunit RuvA (194 aa).

The interval 1–64 (MISRLTGKLV…EDAHLLFGFA (64 aa)) is domain I. Residues 65–143 (TAEERKTFRQ…AHAVTDGLFA (79 aa)) form a domain II region. The flexible linker stretch occupies residues 144 to 147 (AAPA). The tract at residues 147–194 (AADETEDIVGTLLALGYSEREAKAAVKGVPKGTDVGEGVRLALKNLLK) is domain III.

Belongs to the RuvA family. In terms of assembly, homotetramer. Forms an RuvA(8)-RuvB(12)-Holliday junction (HJ) complex. HJ DNA is sandwiched between 2 RuvA tetramers; dsDNA enters through RuvA and exits via RuvB. An RuvB hexamer assembles on each DNA strand where it exits the tetramer. Each RuvB hexamer is contacted by two RuvA subunits (via domain III) on 2 adjacent RuvB subunits; this complex drives branch migration. In the full resolvosome a probable DNA-RuvA(4)-RuvB(12)-RuvC(2) complex forms which resolves the HJ.

The protein localises to the cytoplasm. In terms of biological role, the RuvA-RuvB-RuvC complex processes Holliday junction (HJ) DNA during genetic recombination and DNA repair, while the RuvA-RuvB complex plays an important role in the rescue of blocked DNA replication forks via replication fork reversal (RFR). RuvA specifically binds to HJ cruciform DNA, conferring on it an open structure. The RuvB hexamer acts as an ATP-dependent pump, pulling dsDNA into and through the RuvAB complex. HJ branch migration allows RuvC to scan DNA until it finds its consensus sequence, where it cleaves and resolves the cruciform DNA. The sequence is that of Holliday junction branch migration complex subunit RuvA from Neisseria meningitidis serogroup C / serotype 2a (strain ATCC 700532 / DSM 15464 / FAM18).